The primary structure comprises 310 residues: Protein-L-isoaspartate O-methyltransferase (310 aa).

Disordered stretches follow at residues 1 to 42 (MSGE…AADK) and 64 to 90 (SAAA…APSV). The segment covering 14 to 32 (EDLKRAPRKSEGRAGERHA) has biased composition (basic and acidic residues). Residues 64 to 81 (SAAAKPATAPKPTALKPA) are compositionally biased toward low complexity. Residue serine 157 is part of the active site.

This sequence belongs to the methyltransferase superfamily. L-isoaspartyl/D-aspartyl protein methyltransferase family.

The protein resides in the cytoplasm. The catalysed reaction is [protein]-L-isoaspartate + S-adenosyl-L-methionine = [protein]-L-isoaspartate alpha-methyl ester + S-adenosyl-L-homocysteine. In terms of biological role, catalyzes the methyl esterification of L-isoaspartyl residues in peptides and proteins that result from spontaneous decomposition of normal L-aspartyl and L-asparaginyl residues. It plays a role in the repair and/or degradation of damaged proteins. The sequence is that of Protein-L-isoaspartate O-methyltransferase from Burkholderia lata (strain ATCC 17760 / DSM 23089 / LMG 22485 / NCIMB 9086 / R18194 / 383).